The chain runs to 333 residues: Ketol-acid reductoisomerase (NAD(P)(+)) (333 aa).

The KARI N-terminal Rossmann domain maps to A2–T182. NADP(+) contacts are provided by residues Y25–Q28, S51, and D83–Q86. The active site involves H108. G134 contributes to the NADP(+) binding site. Positions T183 to L327 constitute a KARI C-terminal knotted domain. D191, E195, E227, and E231 together coordinate Mg(2+). Position 252 (S252) interacts with substrate.

It belongs to the ketol-acid reductoisomerase family. Requires Mg(2+) as cofactor.

The enzyme catalyses (2R)-2,3-dihydroxy-3-methylbutanoate + NAD(+) = (2S)-2-acetolactate + NADH + H(+). The catalysed reaction is (2R)-2,3-dihydroxy-3-methylbutanoate + NADP(+) = (2S)-2-acetolactate + NADPH + H(+). It participates in amino-acid biosynthesis; L-isoleucine biosynthesis; L-isoleucine from 2-oxobutanoate: step 2/4. It functions in the pathway amino-acid biosynthesis; L-valine biosynthesis; L-valine from pyruvate: step 2/4. In terms of biological role, involved in the biosynthesis of branched-chain amino acids (BCAA). Catalyzes an alkyl-migration followed by a ketol-acid reduction of (S)-2-acetolactate (S2AL) to yield (R)-2,3-dihydroxy-isovalerate. In the isomerase reaction, S2AL is rearranged via a Mg-dependent methyl migration to produce 3-hydroxy-3-methyl-2-ketobutyrate (HMKB). In the reductase reaction, this 2-ketoacid undergoes a metal-dependent reduction by NADPH or NADH to yield (R)-2,3-dihydroxy-isovalerate. The sequence is that of Ketol-acid reductoisomerase (NAD(P)(+)) from Hydrogenobaculum sp. (strain Y04AAS1).